Consider the following 75-residue polypeptide: UPF0154 protein SERP0914 (75 aa).

A helical membrane pass occupies residues 3-23 (IWVAIILIVIALIAGLIGGFL).

Belongs to the UPF0154 family.

The protein localises to the membrane. This chain is UPF0154 protein SERP0914, found in Staphylococcus epidermidis (strain ATCC 35984 / DSM 28319 / BCRC 17069 / CCUG 31568 / BM 3577 / RP62A).